Consider the following 460-residue polypeptide: MLQIYNTLSKTKEVFTPLVGNQVRMYVCGMTVYDYCHLGHGRSMVAFDVITRWLRHRGYDLTYVRNITDIDDKIINRANENDEPFDVLTERMIAAMHEDEARLNILKPDQEPRATDHIAGMHAMIQTLIDKGYAYAPGNGDVYYRVGKFAGYGKLSRRRVEDLRIGARIEPGEAKEDPLDFVLWKGAKPGEPSWSSPWGEGRPGWHIECSVMSTCCLGDSFDIHGGGNDLEFPHHENEIAQSEAATGKPYAKSWLHCGMITINGEKMSKSLGNFFTIREVLEKYHPEVVRYLLIASHYRSPINYSEENLREAKAALDRFYNALKGLPEAAPAEAAEYVERFAAAMDDDFNTAGACSVLFELAREVNRLRESDLSAAAALAARLKQLAGLLGVLQLEPEAFLQAGAEGKVDAAEVEALIQARLEARAAKNWAESDRIRDQLTAMGVVLEDGKGGTTWRLAD.

Cys28 is a binding site for Zn(2+). A 'HIGH' region motif is present at residues 30–40 (MTVYDYCHLGH). The Zn(2+) site is built by Cys209, His234, and Glu238. Positions 266–270 (KMSKS) match the 'KMSKS' region motif. Position 269 (Lys269) interacts with ATP.

This sequence belongs to the class-I aminoacyl-tRNA synthetase family. In terms of assembly, monomer. The cofactor is Zn(2+).

It localises to the cytoplasm. It catalyses the reaction tRNA(Cys) + L-cysteine + ATP = L-cysteinyl-tRNA(Cys) + AMP + diphosphate. In Pseudomonas aeruginosa (strain UCBPP-PA14), this protein is Cysteine--tRNA ligase.